Here is a 315-residue protein sequence, read N- to C-terminus: tRNA dimethylallyltransferase (315 aa).

An ATP-binding site is contributed by 10–17; it reads GPTGVGKT. 12-17 lines the substrate pocket; sequence TGVGKT. Residues 35-38 form an interaction with substrate tRNA region; that stretch reads DSMQ.

The protein belongs to the IPP transferase family. As to quaternary structure, monomer. The cofactor is Mg(2+).

It carries out the reaction adenosine(37) in tRNA + dimethylallyl diphosphate = N(6)-dimethylallyladenosine(37) in tRNA + diphosphate. In terms of biological role, catalyzes the transfer of a dimethylallyl group onto the adenine at position 37 in tRNAs that read codons beginning with uridine, leading to the formation of N6-(dimethylallyl)adenosine (i(6)A). In Thermodesulfovibrio yellowstonii (strain ATCC 51303 / DSM 11347 / YP87), this protein is tRNA dimethylallyltransferase.